The sequence spans 285 residues: Acetyl-coenzyme A carboxylase carboxyl transferase subunit beta (285 aa).

Residues 29 to 285 (IMTKCPKCKK…ILKIHQEVTK (257 aa)) form the CoA carboxyltransferase N-terminal domain. Residues cysteine 33, cysteine 36, cysteine 52, and cysteine 55 each coordinate Zn(2+). The C4-type zinc finger occupies 33–55 (CPKCKKIMYTKELAENLNVCFNC).

It belongs to the AccD/PCCB family. In terms of assembly, acetyl-CoA carboxylase is a heterohexamer composed of biotin carboxyl carrier protein (AccB), biotin carboxylase (AccC) and two subunits each of ACCase subunit alpha (AccA) and ACCase subunit beta (AccD). The cofactor is Zn(2+).

It is found in the cytoplasm. The enzyme catalyses N(6)-carboxybiotinyl-L-lysyl-[protein] + acetyl-CoA = N(6)-biotinyl-L-lysyl-[protein] + malonyl-CoA. The protein operates within lipid metabolism; malonyl-CoA biosynthesis; malonyl-CoA from acetyl-CoA: step 1/1. Component of the acetyl coenzyme A carboxylase (ACC) complex. Biotin carboxylase (BC) catalyzes the carboxylation of biotin on its carrier protein (BCCP) and then the CO(2) group is transferred by the transcarboxylase to acetyl-CoA to form malonyl-CoA. The sequence is that of Acetyl-coenzyme A carboxylase carboxyl transferase subunit beta from Staphylococcus aureus (strain Mu3 / ATCC 700698).